The sequence spans 360 residues: MQNPKEKMDLSQSILSLIFIVSMGVISFLVIHPFILGFFWASMIVIATWPLMLKIQKILGGKRSLAVIIMIIILLLLFIIPVFFLVNSLIATSIPIIHWLGSNDLELPELAWLQNIPLMGRKIFNSYQTLLNSDGGELIHKIRPYMGHATEFFIIQVRNCGLFIVHSILMLFFSALLYWNGEKISISIHHFAYRLSEKNGKAILLLATQAVRAVALGVAVTALIQALLSGIGLLVSGVPYWALLMIIIFFSCLIQLGPLPILIPSIIWLYWNDDTTWGTILLIWSCFVFILDHILRPFFIRIGADLPILLTLSGVIGGLLTFGMIGLFIGPVVLVIFYRLTISWIYGISIASFLENTSLK.

A run of 9 helical transmembrane segments spans residues 18–38, 39–59, 66–86, 161–181, 204–224, 230–250, 251–271, 280–300, and 316–336; these read IFIV…ILGF, FWAS…QKIL, AVII…FFLV, GLFI…YWNG, LLLA…TALI, GIGL…IIFF, SCLI…WLYW, ILLI…PFFI, and IGGL…VLVI.

It belongs to the autoinducer-2 exporter (AI-2E) (TC 2.A.86) family.

The protein resides in the cell membrane. This Buchnera aphidicola subsp. Acyrthosiphon pisum (strain APS) (Acyrthosiphon pisum symbiotic bacterium) protein is Putative transport protein BU123.